A 731-amino-acid polypeptide reads, in one-letter code: Elongation factor 2 (731 aa).

The tr-type G domain maps to 19 to 234 (EYIRNIGICA…DIIDYCNEGK (216 aa)). Residues 28–35 (AHIDHGKT), 94–98 (DTPGH), and 148–151 (NKVD) contribute to the GTP site. Residue histidine 598 is modified to Diphthamide.

The protein belongs to the TRAFAC class translation factor GTPase superfamily. Classic translation factor GTPase family. EF-G/EF-2 subfamily.

Its subcellular location is the cytoplasm. In terms of biological role, catalyzes the GTP-dependent ribosomal translocation step during translation elongation. During this step, the ribosome changes from the pre-translocational (PRE) to the post-translocational (POST) state as the newly formed A-site-bound peptidyl-tRNA and P-site-bound deacylated tRNA move to the P and E sites, respectively. Catalyzes the coordinated movement of the two tRNA molecules, the mRNA and conformational changes in the ribosome. This Methanobrevibacter ruminantium (strain ATCC 35063 / DSM 1093 / JCM 13430 / OCM 146 / M1) (Methanobacterium ruminantium) protein is Elongation factor 2.